A 140-amino-acid polypeptide reads, in one-letter code: ATP synthase epsilon chain (140 aa).

The protein belongs to the ATPase epsilon chain family. As to quaternary structure, F-type ATPases have 2 components, CF(1) - the catalytic core - and CF(0) - the membrane proton channel. CF(1) has five subunits: alpha(3), beta(3), gamma(1), delta(1), epsilon(1). CF(0) has three main subunits: a, b and c.

The protein resides in the cell inner membrane. Its function is as follows. Produces ATP from ADP in the presence of a proton gradient across the membrane. The protein is ATP synthase epsilon chain of Xanthomonas campestris pv. campestris (strain 8004).